Reading from the N-terminus, the 436-residue chain is GTPase Der (436 aa).

2 consecutive EngA-type G domains span residues 4-167 and 176-351; these read PVVA…PKRG and IKFC…ENHA. GTP contacts are provided by residues 10–17, 57–61, 119–122, 182–189, 229–233, and 294–297; these read GRPNVGKS, DTGGI, NKID, DTAGM, and NKWD. Residues 352–436 enclose the KH-like domain; sequence MRVQTNVLNE…PIKIIARPRK (85 aa).

Belongs to the TRAFAC class TrmE-Era-EngA-EngB-Septin-like GTPase superfamily. EngA (Der) GTPase family. In terms of assembly, associates with the 50S ribosomal subunit.

In terms of biological role, GTPase that plays an essential role in the late steps of ribosome biogenesis. The protein is GTPase Der of Geobacillus sp. (strain WCH70).